The primary structure comprises 207 residues: Ras-related protein Rab-7a (207 aa).

Threonine 2 bears the N-acetylthreonine mark. Positions 17, 18, 19, 20, 21, 22, 23, 34, 35, 37, and 40 each coordinate GTP. Threonine 22 lines the Mg(2+) pocket. The short motif at 28–41 (YVNKKFSNQYKATI) is the Switch 1 element. Mg(2+)-binding residues include threonine 40 and aspartate 63. A GTP-binding site is contributed by glycine 66. The Switch 2 motif lies at 67-82 (QERFQSLGVAFYRGAD). Serine 72 carries the phosphoserine modification. GTP is bound by residues asparagine 125, lysine 126, aspartate 128, alanine 156, and lysine 157. Glycyl lysine isopeptide (Lys-Gly) (interchain with G-Cter in ubiquitin) cross-links involve residues lysine 191 and lysine 194. S-geranylgeranyl cysteine attachment occurs at residues cysteine 205 and cysteine 207. Cysteine 207 bears the Cysteine methyl ester mark.

The protein belongs to the small GTPase superfamily. Rab family. As to quaternary structure, interacts with NTRK1/TRKA. Interacts with RILP. Interacts with PSMA7. Interacts with RNF115. Interacts with FYCO1. Interacts with the PIK3C3/VPS34-PIK3R4 complex. The GTP-bound form interacts with OSBPL1A. The GTP-bound form interacts with RAC1. Interacts with CLN3. Interacts with CHM, the substrate-binding subunit of the Rab geranylgeranyltransferase complex. Interacts with C9orf72. Does not interact with HPS4 and the BLOC-3 complex (heterodimer of HPS1 and HPS4). Interacts with CLN5. Interacts with PLEKHM1 (via N- and C-terminus). Interacts with PRPH; the interaction is direct. Interacts with VPS13A. The GDP-bound form interacts with RIMOC1. Interacts with the MON1A-CCZ1B complex and this interaction is enhanced in the presence of RIMOC1. Interacts with VPS39 and VPS41. Forms a ternary complex with LAMP2 and RUFY4; the interaction with LAMP2 is mediated by RUFY4 (via RUN and coiled coil domains). Mg(2+) is required as a cofactor. Post-translationally, deubiquitination at Lys-191 and Lys-194 by USP32. Phosphorylated at Ser-72 by LRRK1; phosphorylation is dependent on protein kinase C (PKC) activation of LRRK1. In terms of processing, prenylated. Prenylation is required for association with cellular membranes.

It is found in the cytoplasmic vesicle. It localises to the phagosome membrane. The protein resides in the late endosome membrane. Its subcellular location is the lysosome membrane. The protein localises to the melanosome membrane. It is found in the autophagosome membrane. It localises to the lipid droplet. The protein resides in the endosome membrane. Its subcellular location is the mitochondrion membrane. The enzyme catalyses GTP + H2O = GDP + phosphate + H(+). Its activity is regulated as follows. Regulated by guanine nucleotide exchange factors (GEFs) which promote the exchange of bound GDP for free GTP. Regulated by GTPase activating proteins (GAPs) which increase the GTP hydrolysis activity. Inhibited by GDP dissociation inhibitors (GDIs). In terms of biological role, the small GTPases Rab are key regulators of intracellular membrane trafficking, from the formation of transport vesicles to their fusion with membranes. Rabs cycle between an inactive GDP-bound form and an active GTP-bound form that is able to recruit to membranes different sets of downstream effectors directly responsible for vesicle formation, movement, tethering and fusion. In its active state, RAB7A binds to a variety of effector proteins playing a key role in the regulation of endo-lysosomal trafficking. Governs early-to-late endosomal maturation, microtubule minus-end as well as plus-end directed endosomal migration and positioning, and endosome-lysosome transport through different protein-protein interaction cascades. Also plays a central role in growth-factor-mediated cell signaling, nutrient-transporter-mediated nutrient uptake, neurotrophin transport in the axons of neurons and lipid metabolism. Also involved in regulation of some specialized endosomal membrane trafficking, such as maturation of melanosomes, pathogen-induced phagosomes (or vacuoles) and autophagosomes. Plays a role in the maturation and acidification of phagosomes that engulf pathogens, such as S.aureus and Mycobacteria. Plays a role in the fusion of phagosomes with lysosomes. In concert with RAC1, plays a role in regulating the formation of RBs (ruffled borders) in osteoclasts. Controls the endosomal trafficking and neurite outgrowth signaling of NTRK1/TRKA. Regulates the endocytic trafficking of the EGF-EGFR complex by regulating its lysosomal degradation. Involved in the ADRB2-stimulated lipolysis through lipophagy, a cytosolic lipase-independent autophagic pathway. Required for the exosomal release of SDCBP, CD63 and syndecan. Required for vesicular trafficking and cell surface expression of ACE2. May play a role in PRPH neuronal intermediate filament assembly. The polypeptide is Ras-related protein Rab-7a (RAB7A) (Canis lupus familiaris (Dog)).